The primary structure comprises 355 residues: Probable butyrate kinase (355 aa).

It belongs to the acetokinase family.

It localises to the cytoplasm. It carries out the reaction butanoate + ATP = butanoyl phosphate + ADP. The sequence is that of Probable butyrate kinase from Listeria monocytogenes serotype 4b (strain CLIP80459).